The sequence spans 231 residues: MVNIEEWQPKTKLGRLVKEGKITNIDEILSNKYVIREPEIVDVLLPNLEVEFMKWRIIRGKFRSKKPYRMAQKKTAEGNKTRYEVIAIVGDKDGHVGVGLGRSSDLLIAREKAINRAKLNIIKVARGCGSWECACGAPHSIPYQVEGKSGSVRVILKPAPKGVGIVADDEIKKIFRLAGIKDVWVRSFGKTKTKMNHVFAVFDALKKLSNVRVQPFFIKFSGYTEGSIINK.

An S5 DRBM domain is found at 61–124; that stretch reads KFRSKKPYRM…NRAKLNIIKV (64 aa).

It belongs to the universal ribosomal protein uS5 family. Part of the 30S ribosomal subunit. Contacts protein S4.

Functionally, with S4 and S12 plays an important role in translational accuracy. In Nanoarchaeum equitans (strain Kin4-M), this protein is Small ribosomal subunit protein uS5.